Consider the following 66-residue polypeptide: Large ribosomal subunit protein bL33 (66 aa).

This sequence belongs to the bacterial ribosomal protein bL33 family.

In Prochlorococcus marinus (strain MIT 9303), this protein is Large ribosomal subunit protein bL33.